A 502-amino-acid polypeptide reads, in one-letter code: Glutamate--tRNA ligase (502 aa).

The short motif at 12-22 is the 'HIGH' region element; the sequence is PSPTGYLHVGG. A 'KMSKS' region motif is present at residues 259-263; that stretch reads KLSKR. Residue Lys262 participates in ATP binding.

It belongs to the class-I aminoacyl-tRNA synthetase family. Glutamate--tRNA ligase type 1 subfamily. As to quaternary structure, monomer.

Its subcellular location is the cytoplasm. The enzyme catalyses tRNA(Glu) + L-glutamate + ATP = L-glutamyl-tRNA(Glu) + AMP + diphosphate. Its function is as follows. Catalyzes the attachment of glutamate to tRNA(Glu) in a two-step reaction: glutamate is first activated by ATP to form Glu-AMP and then transferred to the acceptor end of tRNA(Glu). The polypeptide is Glutamate--tRNA ligase (Chlorobium chlorochromatii (strain CaD3)).